The primary structure comprises 69 residues: MAEMKTADIRAMSEDQMDDAILSLKKERFNLRFQRATGQLENTSRLREARRDIARIKTIAAQKRAGKTK.

Belongs to the universal ribosomal protein uL29 family.

This Rhodopseudomonas palustris (strain TIE-1) protein is Large ribosomal subunit protein uL29.